Here is a 286-residue protein sequence, read N- to C-terminus: ATP synthase gamma chain (286 aa).

This sequence belongs to the ATPase gamma chain family. In terms of assembly, F-type ATPases have 2 components, CF(1) - the catalytic core - and CF(0) - the membrane proton channel. CF(1) has five subunits: alpha(3), beta(3), gamma(1), delta(1), epsilon(1). CF(0) has three main subunits: a, b and c.

The protein resides in the cell inner membrane. Produces ATP from ADP in the presence of a proton gradient across the membrane. The gamma chain is believed to be important in regulating ATPase activity and the flow of protons through the CF(0) complex. The sequence is that of ATP synthase gamma chain from Pseudomonas syringae pv. tomato (strain ATCC BAA-871 / DC3000).